We begin with the raw amino-acid sequence, 429 residues long: Glutamate-1-semialdehyde 2,1-aminomutase 2 (429 aa).

Lys-268 bears the N6-(pyridoxal phosphate)lysine mark.

This sequence belongs to the class-III pyridoxal-phosphate-dependent aminotransferase family. HemL subfamily. In terms of assembly, homodimer. Requires pyridoxal 5'-phosphate as cofactor.

Its subcellular location is the cytoplasm. The enzyme catalyses (S)-4-amino-5-oxopentanoate = 5-aminolevulinate. It functions in the pathway porphyrin-containing compound metabolism; protoporphyrin-IX biosynthesis; 5-aminolevulinate from L-glutamyl-tRNA(Glu): step 2/2. This is Glutamate-1-semialdehyde 2,1-aminomutase 2 from Bacillus velezensis (strain DSM 23117 / BGSC 10A6 / LMG 26770 / FZB42) (Bacillus amyloliquefaciens subsp. plantarum).